The following is a 218-amino-acid chain: Adenylate kinase (218 aa).

Position 10-15 (10-15 (GAGKGT)) interacts with ATP. The NMP stretch occupies residues 30-59 (STGDMLRAAVKAGSPLGLKVKEVMATGGLV). Residues Thr31, Arg36, 57–59 (GLV), 85–88 (GFPR), and Gln92 contribute to the AMP site. Residues 122–159 (GRRVHEASGRVYHVDYNPPKVEGKDDVTGEPLVQREDD) form an LID region. Residues Arg123 and 132–133 (VY) each bind ATP. The AMP site is built by Arg156 and Arg167. An ATP-binding site is contributed by Gly203.

This sequence belongs to the adenylate kinase family. In terms of assembly, monomer.

It localises to the cytoplasm. The enzyme catalyses AMP + ATP = 2 ADP. Its pathway is purine metabolism; AMP biosynthesis via salvage pathway; AMP from ADP: step 1/1. Functionally, catalyzes the reversible transfer of the terminal phosphate group between ATP and AMP. Plays an important role in cellular energy homeostasis and in adenine nucleotide metabolism. This chain is Adenylate kinase, found in Hahella chejuensis (strain KCTC 2396).